Here is a 368-residue protein sequence, read N- to C-terminus: Glycine betaine monooxygenase reductase subunit (368 aa).

An FAD-binding FR-type domain is found at 16 to 119; the sequence is NGRHNVRCVK…HGPVGDFNVI (104 aa). Residues 284 to 368 enclose the 2Fe-2S ferredoxin-type domain; that stretch reads LQVEFSNSGK…TPKSHVAIEF (85 aa). The [2Fe-2S] cluster site is built by Cys318, Cys323, Cys326, and Cys356.

In the N-terminal section; belongs to the FAD-binding oxidoreductase type 6 family. In terms of assembly, monomer. The system is composed of an oxygenase subunit (BmoA) and a reductase subunit (BmoB). Maximal specific activity is obtained when the ratio of BmoA to BmoB is 5:1. FAD is required as a cofactor. The cofactor is [2Fe-2S] cluster.

It carries out the reaction glycine betaine + NADH + O2 + H(+) = N,N-dimethylglycine + formaldehyde + NAD(+) + H2O. Its function is as follows. Involved in degradation of glycine betaine. Part of a Rieske-type oxygenase system that catalyzes the conversion of glycine betaine (GB) to dimethylglycine (DMG). This subunit is the ferredoxin reductase component of the system. NADH is the preferred electron donor. In Chromohalobacter salexigens (strain ATCC BAA-138 / DSM 3043 / CIP 106854 / NCIMB 13768 / 1H11), this protein is Glycine betaine monooxygenase reductase subunit.